Reading from the N-terminus, the 56-residue chain is Ovomucoid (56 aa).

The Kazal-like domain maps to 6–56 (VDCSEYPKPACTLEYRPLCGSDNKTYGNKCNFCNAVVESNGTLTLSHFGKC). 3 disulfide bridges follow: Cys8-Cys38, Cys16-Cys35, and Cys24-Cys56. The N-linked (GlcNAc...) asparagine glycan is linked to Asn45.

It localises to the secreted. The sequence is that of Ovomucoid from Meleagris ocellata (Ocellated turkey).